A 136-amino-acid polypeptide reads, in one-letter code: Large ribosomal subunit protein bL17 (136 aa).

Belongs to the bacterial ribosomal protein bL17 family. As to quaternary structure, part of the 50S ribosomal subunit. Contacts protein L32.

The sequence is that of Large ribosomal subunit protein bL17 from Rickettsia peacockii (strain Rustic).